A 185-amino-acid chain; its full sequence is MTNEIRKDAETRMDKCVEAFKNQINRIRTGRASPSILDGIHVEYYGSATPLRQLANVVVEDSRTLAISVFDRSLSPAVEKAIMASDLGLNPSSAGTVIRVPLPPLTEERRKDLIKVVRGEAEQGRISVRNVRRDANDKFKALLKDKAISEDEERRAQDDVQKLTDNFIKKVDVALAEKEAELMEF.

It belongs to the RRF family.

The protein localises to the cytoplasm. In terms of biological role, responsible for the release of ribosomes from messenger RNA at the termination of protein biosynthesis. May increase the efficiency of translation by recycling ribosomes from one round of translation to another. The protein is Ribosome-recycling factor of Pectobacterium atrosepticum (strain SCRI 1043 / ATCC BAA-672) (Erwinia carotovora subsp. atroseptica).